Reading from the N-terminus, the 118-residue chain is Small ribosomal subunit protein uS13 (118 aa).

Residues 94 to 118 (SLPLRGQRTKTNARTRKGPRKPIRK) form a disordered region.

It belongs to the universal ribosomal protein uS13 family. In terms of assembly, part of the 30S ribosomal subunit. Forms a loose heterodimer with protein S19. Forms two bridges to the 50S subunit in the 70S ribosome.

Its function is as follows. Located at the top of the head of the 30S subunit, it contacts several helices of the 16S rRNA. In the 70S ribosome it contacts the 23S rRNA (bridge B1a) and protein L5 of the 50S subunit (bridge B1b), connecting the 2 subunits; these bridges are implicated in subunit movement. Contacts the tRNAs in the A and P-sites. The sequence is that of Small ribosomal subunit protein uS13 from Shewanella denitrificans (strain OS217 / ATCC BAA-1090 / DSM 15013).